The primary structure comprises 150 residues: Infection structure-specific protein 24 (150 aa).

Involved in the development of infection structures. The germ tube elongates across the leaf surface of the infected plant until it recognizes a stomate. Physical stimuli provided by the stomate induce differentiation of the germ tube to form a series of infection structures involved in host colonization. The chain is Infection structure-specific protein 24 (INF24) from Uromyces appendiculatus (Rust fungus).